A 503-amino-acid polypeptide reads, in one-letter code: ATP synthase subunit alpha (503 aa).

Residue 169-176 participates in ATP binding; that stretch reads GDRKTGKT.

Belongs to the ATPase alpha/beta chains family. F-type ATPases have 2 components, CF(1) - the catalytic core - and CF(0) - the membrane proton channel. CF(1) has five subunits: alpha(3), beta(3), gamma(1), delta(1), epsilon(1). CF(0) has three main subunits: a(1), b(2) and c(9-12). The alpha and beta chains form an alternating ring which encloses part of the gamma chain. CF(1) is attached to CF(0) by a central stalk formed by the gamma and epsilon chains, while a peripheral stalk is formed by the delta and b chains.

It localises to the cell membrane. The enzyme catalyses ATP + H2O + 4 H(+)(in) = ADP + phosphate + 5 H(+)(out). In terms of biological role, produces ATP from ADP in the presence of a proton gradient across the membrane. The alpha chain is a regulatory subunit. The protein is ATP synthase subunit alpha of Lactobacillus delbrueckii subsp. bulgaricus (strain ATCC BAA-365 / Lb-18).